The sequence spans 343 residues: Follistatin (343 aa).

The N-terminal stretch at Met-1–Ala-28 is a signal peptide. The region spanning Gly-29–Gly-102 is the TB domain. Intrachain disulfides connect Cys-31–Cys-54, Cys-41–Cys-87, Cys-55–Cys-90, Cys-94–Cys-105, Cys-99–Cys-115, Cys-117–Cys-149, Cys-121–Cys-142, and Cys-131–Cys-163. Positions Thr-93–Val-116 constitute a Follistatin-like 1 domain. Kazal-like domains follow at residues Cys-99–Lys-165, Asn-185–Lys-240, and Arg-263–Ser-317. Asn-123 carries N-linked (GlcNAc...) asparagine glycosylation. One can recognise a Follistatin-like 2 domain in the interval Thr-166 to Val-189. 3 disulfides stabilise this stretch: Cys-191-Cys-224, Cys-195-Cys-217, and Cys-206-Cys-238. Residues Ser-243–Ala-267 form the Follistatin-like 3 domain. Disulfide bonds link Cys-269–Cys-301, Cys-273–Cys-294, and Cys-283–Cys-315. Residue Asn-287 is glycosylated (N-linked (GlcNAc...) asparagine). Residues Cys-315–Trp-343 form a disordered region. Residues Glu-320–Asp-332 show a composition bias toward acidic residues.

Monomer. As to expression, ciliary ganglion neurons. Levels are higher in the iris than the choroid.

Its subcellular location is the secreted. Binds directly to activin and functions as an activin antagonist. Inhibits activin A signaling in the iris and regulates somatostatin phenotype in ciliary ganglion neurons. Specific inhibitor of the biosynthesis and secretion of pituitary follicle stimulating hormone (FSH). The polypeptide is Follistatin (FST) (Gallus gallus (Chicken)).